The following is an 878-amino-acid chain: Phosphoenolpyruvate carboxylase (878 aa).

Catalysis depends on residues H140 and K545.

The protein belongs to the PEPCase type 1 family. The cofactor is Mg(2+).

The catalysed reaction is oxaloacetate + phosphate = phosphoenolpyruvate + hydrogencarbonate. In terms of biological role, forms oxaloacetate, a four-carbon dicarboxylic acid source for the tricarboxylic acid cycle. In Pseudomonas syringae pv. tomato (strain ATCC BAA-871 / DC3000), this protein is Phosphoenolpyruvate carboxylase.